Reading from the N-terminus, the 156-residue chain is SsrA-binding protein (156 aa).

It belongs to the SmpB family.

It is found in the cytoplasm. Required for rescue of stalled ribosomes mediated by trans-translation. Binds to transfer-messenger RNA (tmRNA), required for stable association of tmRNA with ribosomes. tmRNA and SmpB together mimic tRNA shape, replacing the anticodon stem-loop with SmpB. tmRNA is encoded by the ssrA gene; the 2 termini fold to resemble tRNA(Ala) and it encodes a 'tag peptide', a short internal open reading frame. During trans-translation Ala-aminoacylated tmRNA acts like a tRNA, entering the A-site of stalled ribosomes, displacing the stalled mRNA. The ribosome then switches to translate the ORF on the tmRNA; the nascent peptide is terminated with the 'tag peptide' encoded by the tmRNA and targeted for degradation. The ribosome is freed to recommence translation, which seems to be the essential function of trans-translation. This is SsrA-binding protein from Clostridium botulinum (strain Loch Maree / Type A3).